The following is a 67-amino-acid chain: Large ribosomal subunit protein eL24 (67 aa).

The Zn(2+) site is built by C7, C10, C33, and C37. A C4-type zinc finger spans residues 7 to 37 (CDYCGTDIEPGTGTMFVHKDGATTHFCSSKC). Residues 48–60 (RNLEWTDTARGEA) show a composition bias toward basic and acidic residues. A disordered region spans residues 48-67 (RNLEWTDTARGEAGEAEDEA).

This sequence belongs to the eukaryotic ribosomal protein eL24 family. Part of the 50S ribosomal subunit. Forms a cluster with proteins L3 and L14. The cofactor is Zn(2+).

In terms of biological role, binds to the 23S rRNA. This chain is Large ribosomal subunit protein eL24 (rpl24e), found in Haloarcula marismortui (strain ATCC 43049 / DSM 3752 / JCM 8966 / VKM B-1809) (Halobacterium marismortui).